Consider the following 625-residue polypeptide: Isocitrate dehydrogenase kinase/phosphatase (625 aa).

ATP contacts are provided by residues 325 to 331 (APGIKGM) and K346. D381 is a catalytic residue. A disordered region spans residues 596-625 (RRHSPGRNDHELLTHLPPEPMLTGLSGMTP).

It belongs to the AceK family.

Its subcellular location is the cytoplasm. The enzyme catalyses L-seryl-[isocitrate dehydrogenase] + ATP = O-phospho-L-seryl-[isocitrate dehydrogenase] + ADP + H(+). In terms of biological role, bifunctional enzyme which can phosphorylate or dephosphorylate isocitrate dehydrogenase (IDH) on a specific serine residue. This is a regulatory mechanism which enables bacteria to bypass the Krebs cycle via the glyoxylate shunt in response to the source of carbon. When bacteria are grown on glucose, IDH is fully active and unphosphorylated, but when grown on acetate or ethanol, the activity of IDH declines drastically concomitant with its phosphorylation. The polypeptide is Isocitrate dehydrogenase kinase/phosphatase (Polaromonas sp. (strain JS666 / ATCC BAA-500)).